The primary structure comprises 213 residues: MHQQKRQPELVEGNLPVFVFPTELIFYADDQSTHKQVLTLYNPYEFALKFKVLCTTPNKYVVIDAAGAVKPQCCVDIVIRHRDVRSCHYGVIDKFRLQVSEQSQRKALGRKEVIATLLPSAKEQQKEEEEKRIKEHLTESVFFEQSCQPENRAVSSGPSLLTVFLGVVCIAALMLPTLGDMESLVPLYLHLSVNQKLVAAYILGLITMAILRT.

Residues 16-143 (PVFVFPTELI…KEHLTESVFF (128 aa)) enclose the MSP domain. 2 consecutive transmembrane segments (helical) span residues 159–179 (SLLT…PTLG) and 191–211 (LSVN…MAIL). The short motif at 205–208 (LITM) is the Nuclear export signal element.

It is found in the endoplasmic reticulum membrane. The protein resides in the golgi apparatus membrane. Its function is as follows. Plays a role in differentiation and/or proliferation of mesenchymal stem cells. Proposed to be involved in epithelial-to-mesenchymal transition (EMT). However, another study suggests that it is not required for EMT or stem cell self-renewal and acts during later stages of differentiation. The polypeptide is Motile sperm domain-containing protein 1 (Mospd1) (Rattus norvegicus (Rat)).